Here is a 563-residue protein sequence, read N- to C-terminus: Arginine--tRNA ligase (563 aa).

The short motif at Pro-122–His-132 is the 'HIGH' region element.

The protein belongs to the class-I aminoacyl-tRNA synthetase family. Monomer.

It is found in the cytoplasm. It carries out the reaction tRNA(Arg) + L-arginine + ATP = L-arginyl-tRNA(Arg) + AMP + diphosphate. The polypeptide is Arginine--tRNA ligase (Latilactobacillus sakei subsp. sakei (strain 23K) (Lactobacillus sakei subsp. sakei)).